Here is a 146-residue protein sequence, read N- to C-terminus: Monothiol glutaredoxin-5, mitochondrial (146 aa).

The Glutaredoxin domain maps to arginine 26 to alanine 131. Glutathione is bound at residue lysine 43. Cysteine 51 serves as a coordination point for [2Fe-2S] cluster. Glutathione contacts are provided by residues arginine 83–lysine 87, isoleucine 95, and serine 108–aspartate 109.

Belongs to the glutaredoxin family. Monothiol subfamily. In terms of assembly, homodimer. Interacts with ISA1 and ISA2.

The protein resides in the mitochondrion. Monothiol glutaredoxin involved in mitochondrial iron-sulfur (Fe/S) cluster transfer. Receives 2Fe/2S clusters from scaffold protein isu1 and mediates their transfer to apoproteins, to the 4Fe/FS cluster biosynthesis machinery, or export from mitochondrion. The chain is Monothiol glutaredoxin-5, mitochondrial from Schizosaccharomyces pombe (strain 972 / ATCC 24843) (Fission yeast).